A 617-amino-acid chain; its full sequence is tRNA uridine 5-carboxymethylaminomethyl modification enzyme MnmG (617 aa).

FAD-binding positions include 9-14 (GAGHAG), V121, and T176. 269-283 (GPRYCPSIEDKFVRF) lines the NAD(+) pocket. Q366 provides a ligand contact to FAD.

This sequence belongs to the MnmG family. In terms of assembly, homodimer. Heterotetramer of two MnmE and two MnmG subunits. FAD is required as a cofactor.

The protein localises to the cytoplasm. In terms of biological role, NAD-binding protein involved in the addition of a carboxymethylaminomethyl (cmnm) group at the wobble position (U34) of certain tRNAs, forming tRNA-cmnm(5)s(2)U34. This Acholeplasma laidlawii (strain PG-8A) protein is tRNA uridine 5-carboxymethylaminomethyl modification enzyme MnmG.